The chain runs to 235 residues: Leucyl/phenylalanyl-tRNA--protein transferase (235 aa).

This sequence belongs to the L/F-transferase family.

Its subcellular location is the cytoplasm. It catalyses the reaction N-terminal L-lysyl-[protein] + L-leucyl-tRNA(Leu) = N-terminal L-leucyl-L-lysyl-[protein] + tRNA(Leu) + H(+). The enzyme catalyses N-terminal L-arginyl-[protein] + L-leucyl-tRNA(Leu) = N-terminal L-leucyl-L-arginyl-[protein] + tRNA(Leu) + H(+). The catalysed reaction is L-phenylalanyl-tRNA(Phe) + an N-terminal L-alpha-aminoacyl-[protein] = an N-terminal L-phenylalanyl-L-alpha-aminoacyl-[protein] + tRNA(Phe). In terms of biological role, functions in the N-end rule pathway of protein degradation where it conjugates Leu, Phe and, less efficiently, Met from aminoacyl-tRNAs to the N-termini of proteins containing an N-terminal arginine or lysine. This chain is Leucyl/phenylalanyl-tRNA--protein transferase, found in Anaeromyxobacter sp. (strain Fw109-5).